Reading from the N-terminus, the 459-residue chain is Cysteine--tRNA ligase (459 aa).

A Zn(2+)-binding site is contributed by cysteine 28. The 'HIGH' region signature appears at 30 to 40 (ITIYDLCHIGH). Residues cysteine 209, histidine 234, and glutamate 238 each contribute to the Zn(2+) site. Positions 266–270 (KMSKS) match the 'KMSKS' region motif. Lysine 269 is an ATP binding site.

It belongs to the class-I aminoacyl-tRNA synthetase family. As to quaternary structure, monomer. Zn(2+) is required as a cofactor.

The protein resides in the cytoplasm. It catalyses the reaction tRNA(Cys) + L-cysteine + ATP = L-cysteinyl-tRNA(Cys) + AMP + diphosphate. In Shewanella sediminis (strain HAW-EB3), this protein is Cysteine--tRNA ligase.